Consider the following 658-residue polypeptide: Vertnin (658 aa).

The protein belongs to the vertnin family.

The protein localises to the nucleus. Functionally, acts as a transcription factor that regulates development of thoracic vertebrae. The polypeptide is Vertnin (VRTN) (Bos taurus (Bovine)).